The primary structure comprises 335 residues: Fructose-1,6-bisphosphatase class 1 1 (335 aa).

Residues Glu92, Asp114, Leu116, and Asp117 each coordinate Mg(2+). Substrate-binding positions include 117–120 (DGSS), Asn209, and Lys275. Glu281 is a binding site for Mg(2+).

It belongs to the FBPase class 1 family. Homotetramer. Mg(2+) serves as cofactor.

The protein resides in the cytoplasm. It carries out the reaction beta-D-fructose 1,6-bisphosphate + H2O = beta-D-fructose 6-phosphate + phosphate. It functions in the pathway carbohydrate biosynthesis; gluconeogenesis. This Polaromonas naphthalenivorans (strain CJ2) protein is Fructose-1,6-bisphosphatase class 1 1.